Reading from the N-terminus, the 187-residue chain is Peptide deformylase 2 (187 aa).

Fe cation contacts are provided by Cys-107 and His-149. The active site involves Glu-150. His-153 is a binding site for Fe cation.

This sequence belongs to the polypeptide deformylase family. It depends on Fe(2+) as a cofactor.

The catalysed reaction is N-terminal N-formyl-L-methionyl-[peptide] + H2O = N-terminal L-methionyl-[peptide] + formate. Removes the formyl group from the N-terminal Met of newly synthesized proteins. Requires at least a dipeptide for an efficient rate of reaction. N-terminal L-methionine is a prerequisite for activity but the enzyme has broad specificity at other positions. This chain is Peptide deformylase 2, found in Gloeobacter violaceus (strain ATCC 29082 / PCC 7421).